A 257-amino-acid chain; its full sequence is MRMDERKADELRPISIEINYLHHPEGSVLISIGNTKVICTASLEDRVPPFLRGQGKGWITAEYSMLPRATEQRNMRESTRGKVSGRTMEIQRLIGRALRSIIDLDKIGERTVWIDCDVIQADGGTRTTSITGAFVALSLAMEKALANGAIQEWPIDDFLAAVSVGIDPKLGAILDLCYAEDAQAEVDMNVVMTGKGEYVELQGTGEEATFSHNQLLTILALADKGIKQLIEEQRNALGAIANRVDEAKQKKKEQSEA.

Residues Arg-86 and 124-126 (GTR) contribute to the phosphate site.

This sequence belongs to the RNase PH family. Homohexameric ring arranged as a trimer of dimers.

The enzyme catalyses tRNA(n+1) + phosphate = tRNA(n) + a ribonucleoside 5'-diphosphate. In terms of biological role, phosphorolytic 3'-5' exoribonuclease that plays an important role in tRNA 3'-end maturation. Removes nucleotide residues following the 3'-CCA terminus of tRNAs; can also add nucleotides to the ends of RNA molecules by using nucleoside diphosphates as substrates, but this may not be physiologically important. Probably plays a role in initiation of 16S rRNA degradation (leading to ribosome degradation) during starvation. The chain is Ribonuclease PH from Halalkalibacterium halodurans (strain ATCC BAA-125 / DSM 18197 / FERM 7344 / JCM 9153 / C-125) (Bacillus halodurans).